The chain runs to 170 residues: Crossover junction endodeoxyribonuclease RuvC (170 aa).

Catalysis depends on residues aspartate 9, glutamate 70, and aspartate 145. Mg(2+)-binding residues include aspartate 9, glutamate 70, and aspartate 145.

It belongs to the RuvC family. Homodimer which binds Holliday junction (HJ) DNA. The HJ becomes 2-fold symmetrical on binding to RuvC with unstacked arms; it has a different conformation from HJ DNA in complex with RuvA. In the full resolvosome a probable DNA-RuvA(4)-RuvB(12)-RuvC(2) complex forms which resolves the HJ. The cofactor is Mg(2+).

The protein localises to the cytoplasm. It carries out the reaction Endonucleolytic cleavage at a junction such as a reciprocal single-stranded crossover between two homologous DNA duplexes (Holliday junction).. Functionally, the RuvA-RuvB-RuvC complex processes Holliday junction (HJ) DNA during genetic recombination and DNA repair. Endonuclease that resolves HJ intermediates. Cleaves cruciform DNA by making single-stranded nicks across the HJ at symmetrical positions within the homologous arms, yielding a 5'-phosphate and a 3'-hydroxyl group; requires a central core of homology in the junction. The consensus cleavage sequence is 5'-(A/T)TT(C/G)-3'. Cleavage occurs on the 3'-side of the TT dinucleotide at the point of strand exchange. HJ branch migration catalyzed by RuvA-RuvB allows RuvC to scan DNA until it finds its consensus sequence, where it cleaves and resolves the cruciform DNA. This is Crossover junction endodeoxyribonuclease RuvC from Chlamydia muridarum (strain MoPn / Nigg).